A 155-amino-acid chain; its full sequence is Small ribosomal subunit protein uS7 (155 aa).

The protein belongs to the universal ribosomal protein uS7 family. As to quaternary structure, part of the 30S ribosomal subunit. Contacts proteins S9 and S11.

Functionally, one of the primary rRNA binding proteins, it binds directly to 16S rRNA where it nucleates assembly of the head domain of the 30S subunit. Is located at the subunit interface close to the decoding center, probably blocks exit of the E-site tRNA. This is Small ribosomal subunit protein uS7 from Sulfurovum sp. (strain NBC37-1).